The sequence spans 362 residues: 3-dehydroquinate synthase (362 aa).

NAD(+) contacts are provided by residues 71-76 (DGEQYK), 105-109 (GVVGD), 129-130 (TT), K142, K151, and 169-172 (CLKT). 3 residues coordinate Zn(2+): E184, H247, and H264.

This sequence belongs to the sugar phosphate cyclases superfamily. Dehydroquinate synthase family. Co(2+) serves as cofactor. Zn(2+) is required as a cofactor. The cofactor is NAD(+).

The protein resides in the cytoplasm. It carries out the reaction 7-phospho-2-dehydro-3-deoxy-D-arabino-heptonate = 3-dehydroquinate + phosphate. It participates in metabolic intermediate biosynthesis; chorismate biosynthesis; chorismate from D-erythrose 4-phosphate and phosphoenolpyruvate: step 2/7. Catalyzes the conversion of 3-deoxy-D-arabino-heptulosonate 7-phosphate (DAHP) to dehydroquinate (DHQ). The protein is 3-dehydroquinate synthase of Shigella boydii serotype 18 (strain CDC 3083-94 / BS512).